The following is a 344-amino-acid chain: Tripartite motif-containing protein 44 (344 aa).

A disordered region spans residues 69–165; that stretch reads PPASGDDALP…ETEAESEFDP (97 aa). Over residues 88 to 165 the composition is skewed to acidic residues; sequence EGEVESEVGE…ETEAESEFDP (78 aa). The segment at 174–215 adopts a B box-type zinc-finger fold; it reads VAKRKCPDHGLDLSTYCQEDRQLICVLCPVIGAHRGHQLSTL. Cysteine 179, histidine 182, cysteine 201, and histidine 207 together coordinate Zn(2+). A coiled-coil region spans residues 290 to 325; sequence AHVTEILADIQSHMDRLMTQMAQAKEQLDTSNESAE. The tract at residues 309 to 344 is disordered; the sequence is QMAQAKEQLDTSNESAEPKAEGDEEGPSGASEEEDT. A compositionally biased stretch (acidic residues) spans 330 to 344; the sequence is GDEEGPSGASEEEDT. Phosphoserine occurs at positions 336 and 339.

Interacts (via coiled coil) with TRIM17 (via coiled coil).

In terms of biological role, may play a role in the process of differentiation and maturation of neuronal cells. May regulate the activity of TRIM17. Is a negative regulator of PAX6 expression. The sequence is that of Tripartite motif-containing protein 44 (Trim44) from Rattus norvegicus (Rat).